The chain runs to 258 residues: Sugar fermentation stimulation protein homolog (258 aa).

This sequence belongs to the SfsA family.

The protein is Sugar fermentation stimulation protein homolog of Marinomonas sp. (strain MWYL1).